We begin with the raw amino-acid sequence, 363 residues long: MRLQEIQLVNFRKHKELVFAPSEAITVVYGPNGSGKTNILEAVHYCTLARGLNRSLDRECLNFDAGYFLLQGTFADDRGIELSVKVSYEKNVEKKIFINSDELKKYSQLIGRIPCVTFSPMELSLVNGSPQERRRFMDNALSQTNKSYLDDLLQYRRVLQQRNTLLGAVNEKGMDRDSLEVWTEKLTQLACSIVSERLAFIERLFVYIEPVYEQLGLGEVPGISYRSAAGRHANEIAPEELFSFMMQRFREIEHQEIFRKQSLAGPHRDDLVFRFNDTDVKKYASQGQLRTFLIAVKLALHTLVSDTTGERPLFLLDDLFSELDGTRIEKILEQLEGAGQSIITATDRKDGSGVRSVSIEDLL.

ATP is bound at residue 30–37 (GPNGSGKT).

This sequence belongs to the RecF family.

It localises to the cytoplasm. The RecF protein is involved in DNA metabolism; it is required for DNA replication and normal SOS inducibility. RecF binds preferentially to single-stranded, linear DNA. It also seems to bind ATP. This is DNA replication and repair protein RecF from Chlorobium phaeobacteroides (strain BS1).